A 268-amino-acid chain; its full sequence is uncharacterized protein (268 aa).

The segment at 21–61 (CVICLQKDGLRAQLSPCGHDQFDYSCICRWMDQSLTCPICK) adopts an RING-type; degenerate zinc-finger fold.

It is found in the mitochondrion. The protein resides in the nucleus. This is an uncharacterized protein from Schizosaccharomyces pombe (strain 972 / ATCC 24843) (Fission yeast).